The following is a 549-amino-acid chain: Copalyl diphosphate synthase (549 aa).

The DXDDTA motif signature appears at 321–326 (DADDTA). Residues 451 to 457 (QRDDGSW) carry the QXXDGSW motif motif.

It belongs to the terpene synthase family. Mg(2+) serves as cofactor.

The catalysed reaction is (2E,6E,10E)-geranylgeranyl diphosphate = (+)-copalyl diphosphate. In terms of biological role, involved in the biosynthesis of the labdane-type bicyclic diterpene labda-8(17),12(E),14-triene. Catalyzes the conversion of geranylgeranyl diphosphate (GGDP) into (+)-copalyl diphosphate. In Streptomyces anulatus (Streptomyces chrysomallus), this protein is Copalyl diphosphate synthase.